The sequence spans 163 residues: ATP synthase subunit delta, mitochondrial (163 aa).

Residues 1-18 constitute a mitochondrion transit peptide; sequence MLARTIQRFSVVAKRGYA.

This sequence belongs to the ATPase epsilon chain family. In terms of assembly, subunit of the F-type ATPase which has 2 components, CF(1) - the catalytic core - and CF(0) - the membrane proton channel.

It is found in the mitochondrion. The protein resides in the mitochondrion inner membrane. Its function is as follows. Mitochondrial membrane ATP synthase (F(1)F(0) ATP synthase or Complex V) produces ATP from ADP in the presence of a proton gradient across the membrane which is generated by electron transport complexes of the respiratory chain. F-type ATPases consist of two structural domains, F(1) - containing the extramembraneous catalytic core, and F(0) - containing the membrane proton channel, linked together by a central stalk and a peripheral stalk. During catalysis, ATP turnover in the catalytic domain of F(1) is coupled via a rotary mechanism of the central stalk subunits to proton translocation. Part of the complex F(1) domain and of the central stalk which is part of the complex rotary element. This is ATP synthase subunit delta, mitochondrial from Caenorhabditis elegans.